The chain runs to 346 residues: MSSSNLRVALVGSTGYTALEVARLLLTHPGADLVVATSRQDEGKPLSEIHPMLAGRCDVTLQPLDADVIAKSADVAMCCLPHGASAESVKQLAEAGMRVIDFSADFRLSSLETYQHWYGVKHPWPERIGDVVYGMPEFFADEIRSADIVANPGCYPTSAIMPLAPLVKAGLIETDDIIVDSKSGVSGAGRSPKLGTLYCETNESISAYAVGTHRHAPEIADLVERIAGAPIEVMFTPHLTPMDRGILSTIYVKPVGKAGSVEDAVRAMMSLLRDTYSDQPCVHVVDHLPATKYVAGTNHVQISVRPSGKRAVIVCAIDNLTKGASGAAVQNMNVMFGLPETAGLLM.

Cys-154 is an active-site residue.

Belongs to the NAGSA dehydrogenase family. Type 1 subfamily.

It localises to the cytoplasm. It carries out the reaction N-acetyl-L-glutamate 5-semialdehyde + phosphate + NADP(+) = N-acetyl-L-glutamyl 5-phosphate + NADPH + H(+). Its pathway is amino-acid biosynthesis; L-arginine biosynthesis; N(2)-acetyl-L-ornithine from L-glutamate: step 3/4. Catalyzes the NADPH-dependent reduction of N-acetyl-5-glutamyl phosphate to yield N-acetyl-L-glutamate 5-semialdehyde. This Rhodopirellula baltica (strain DSM 10527 / NCIMB 13988 / SH1) protein is N-acetyl-gamma-glutamyl-phosphate reductase.